A 326-amino-acid polypeptide reads, in one-letter code: Protein FAM50 homolog (326 aa).

A disordered region spans residues 77-111 (ISNRDLQVARGDQSSSTQSKDSQEAREKEEHVAKH). Residues 97–109 (DSQEAREKEEHVA) are compositionally biased toward basic and acidic residues.

It belongs to the FAM50 family.

The protein is Protein FAM50 homolog of Caenorhabditis elegans.